Reading from the N-terminus, the 215-residue chain is Sodium channel regulatory subunit beta-2 (215 aa).

The first 29 residues, 1-29, serve as a signal peptide directing secretion; sequence MHRDAWLPRPAFSLTGLSLFFSLVPSGRS. At 30–157 the chain is on the extracellular side; that stretch reads MEVTVPTTLS…LEVPPERDST (128 aa). Residues 32-154 form the Ig-like C2-type domain; sequence VTVPTTLSVL…QVLLEVPPER (123 aa). Asn42, Asn66, and Asn74 each carry an N-linked (GlcNAc...) asparagine glycan. 2 disulfide bridges follow: Cys50-Cys127 and Cys72-Cys75. Residues 158–179 form a helical membrane-spanning segment; it reads VAVIVGASVGGFLAVVILVLMV. The Cytoplasmic portion of the chain corresponds to 180 to 215; it reads VKCVRRKKEQKLSTDDLKTEEEGKTDGEGNAEDGAK. A disordered region spans residues 187–215; it reads KEQKLSTDDLKTEEEGKTDGEGNAEDGAK. The span at 189–215 shows a compositional bias: basic and acidic residues; sequence QKLSTDDLKTEEEGKTDGEGNAEDGAK. Ser192 carries the post-translational modification Phosphoserine. Thr204 carries the post-translational modification Phosphothreonine.

This sequence belongs to the sodium channel auxiliary subunit SCN2B (TC 8.A.17) family. In terms of assembly, a voltage-gated sodium (Nav) channel consists of an ion-conducting pore-forming alpha subunit functional on its own that is regulated by one or more beta subunits. The beta subunit SCN2B is disulfide-linked to the pore-forming alpha subunit. Interacts with SCN1A; regulatory subunit of SCN1A/Nav1.1. Interacts with SCN2A; regulatory subunit of SCN2A/Nav1.2. Interacts with SCN3A; regulatory subunit of SCN3A/Nav1.3. Interacts with SCN5A; regulatory subunit of SCN5A/Nav1.5. Interacts with SCN8A; regulatory subunit of SCN8A/Nav1.6. Interacts with SCN9A; regulatory subunit of SCN9A/Nav1.7. Interacts with SCN10A; regulatory subunit of SCN10A/Nav1.8. Interacts with TNR; may play a crucial role in clustering and regulation of activity of SCN2B-containing Nav channels at nodes of Ranvier.

Its subcellular location is the cell membrane. The protein resides in the cell projection. It localises to the axon. Regulatory subunit of multiple voltage-gated sodium (Nav) channels directly mediating the depolarization of excitable membranes. Navs, also called VGSCs (voltage-gated sodium channels) or VDSCs (voltage-dependent sodium channels), operate by switching between closed and open conformations depending on the voltage difference across the membrane. In the open conformation they allow Na(+) ions to selectively pass through the pore, along their electrochemical gradient. The influx of Na+ ions provokes membrane depolarization, initiating the propagation of electrical signals throughout cells and tissues. The accessory beta subunits participate in localization and functional modulation of the Nav channels. Modulates the activity of SCN1A/Nav1.1, SCN2A/Nav1.2, SCN2A/Nav1.3, SCN5A/Nav1.5, SCN8A/Nav1.6, SCN9A/Nav1.7 and SCN10A/Nav1.8. In Rattus norvegicus (Rat), this protein is Sodium channel regulatory subunit beta-2.